Here is a 181-residue protein sequence, read N- to C-terminus: Heavy metal-associated isoprenylated plant protein 46 (181 aa).

Residues 2–71 (KQKILIRVTM…KVAFAELVSV (70 aa)) enclose the HMA domain. The tract at residues 74 to 121 (VEPPKKEDEKKGGDGKGAEGKGGDQKGGDKKGPDDKEPPEPKPVPCYP) is disordered. The segment covering 75 to 113 (EPPKKEDEKKGGDGKGAEGKGGDQKGGDKKGPDDKEPPE) has biased composition (basic and acidic residues). Cysteine 178 is modified (cysteine methyl ester). Cysteine 178 carries S-farnesyl cysteine lipidation. A propeptide spans 179–181 (KIM) (removed in mature form).

The protein belongs to the HIPP family.

Its function is as follows. Probable heavy-metal-binding protein. The protein is Heavy metal-associated isoprenylated plant protein 46 of Arabidopsis thaliana (Mouse-ear cress).